A 327-amino-acid polypeptide reads, in one-letter code: 2-methoxy-6-polyprenyl-1,4-benzoquinol methylase, mitochondrial (327 aa).

Residues 1–42 (MAAPGSCALWSYCGRGWSRAMRGCQLLGLRSSWPGDLLSARL) constitute a mitochondrion transit peptide. Residues T117, D171, and 199–200 (DA) contribute to the S-adenosyl-L-methionine site.

This sequence belongs to the class I-like SAM-binding methyltransferase superfamily. MenG/UbiE family. In terms of assembly, component of a multi-subunit COQ enzyme complex, composed of at least COQ3, COQ4, COQ5, COQ6, COQ7 and COQ9. Interacts with PYURF; the interaction is direct, stabilizes COQ5 protein and associates PYURF with COQ enzyme complex. As to expression, widely expressed, with highest levels in liver, lung, placenta and skeletal muscle.

The protein localises to the mitochondrion inner membrane. The catalysed reaction is 2-methoxy-6-(all-trans-decaprenyl)benzene-1,4-diol + S-adenosyl-L-methionine = 5-methoxy-2-methyl-3-(all-trans-decaprenyl)benzene-1,4-diol + S-adenosyl-L-homocysteine + H(+). It participates in cofactor biosynthesis; ubiquinone biosynthesis. In terms of biological role, methyltransferase required for the conversion of 2-decaprenyl-6-methoxy-1,4-benzoquinol (DDMQH2) to 2-decaprenyl-3-methyl-6-methoxy-1,4-benzoquinol (DMQH2). In Homo sapiens (Human), this protein is 2-methoxy-6-polyprenyl-1,4-benzoquinol methylase, mitochondrial.